Consider the following 332-residue polypeptide: Ribosomal RNA small subunit methyltransferase H (332 aa).

S-adenosyl-L-methionine is bound by residues 39–41, aspartate 56, phenylalanine 83, aspartate 100, and glutamine 107; that span reads GGY.

This sequence belongs to the methyltransferase superfamily. RsmH family.

The protein resides in the cytoplasm. It catalyses the reaction cytidine(1402) in 16S rRNA + S-adenosyl-L-methionine = N(4)-methylcytidine(1402) in 16S rRNA + S-adenosyl-L-homocysteine + H(+). Specifically methylates the N4 position of cytidine in position 1402 (C1402) of 16S rRNA. This chain is Ribosomal RNA small subunit methyltransferase H, found in Bartonella tribocorum (strain CIP 105476 / IBS 506).